Here is a 30-residue protein sequence, read N- to C-terminus: Conotoxin TVIIA (30 aa).

3 cysteine pairs are disulfide-bonded: C2/C14, C9/C19, and C13/C24. 2 positions are modified to 4-hydroxyproline: P10 and P11.

Post-translationally, three different forms of TVIIA exist. Pro-10 and Pro-11 of conotoxin TVIIA are hydroxylated in TVIIA, whereas Pro-10 is not hydroxylated in [Pro10]TVIIA and neither Pro-10 nor Pro-11 are hydroxylated in [Pro10,11]TVIIA. Expressed by the venom duct.

The protein resides in the secreted. Functionally, by structural similarity with conotoxin GS, may inhibit the sodium channel (Nav). No effect was observed upon intracranial injections into mice and intraperitoneal injections into goldfish (25 ug). This chain is Conotoxin TVIIA, found in Conus tulipa (Fish-hunting cone snail).